The primary structure comprises 248 residues: Sugar fermentation stimulation protein homolog (248 aa).

It belongs to the SfsA family.

The polypeptide is Sugar fermentation stimulation protein homolog (Methylorubrum extorquens (strain PA1) (Methylobacterium extorquens)).